The sequence spans 833 residues: Leucine--tRNA ligase (833 aa).

Positions 41-52 (PYPSGAGLHVGH) match the 'HIGH' region motif. Positions 610–614 (KMSKS) match the 'KMSKS' region motif. Lys-613 lines the ATP pocket.

It belongs to the class-I aminoacyl-tRNA synthetase family.

Its subcellular location is the cytoplasm. It catalyses the reaction tRNA(Leu) + L-leucine + ATP = L-leucyl-tRNA(Leu) + AMP + diphosphate. The chain is Leucine--tRNA ligase from Streptococcus equi subsp. zooepidemicus (strain MGCS10565).